A 287-amino-acid chain; its full sequence is Sulfofructosephosphate aldolase (287 aa).

Asp-82 (proton donor) is an active-site residue. Positions 83 and 180 each coordinate Zn(2+). Dihydroxyacetone phosphate is bound at residue Gly-181. Residue His-208 coordinates Zn(2+). Residues 209-211 and 230-233 contribute to the dihydroxyacetone phosphate site; these read GGS and NVDT.

This sequence belongs to the class II fructose-bisphosphate aldolase family. The cofactor is Zn(2+).

The catalysed reaction is 6-deoxy-6-sulfo-D-fructose 1-phosphate = (2S)-3-sulfolactaldehyde + dihydroxyacetone phosphate. Part of the sulfo-EMP2 pathway, a D-sulfoquinovose degradation pathway that produces sulfolactate (SL). Cleaves 6-deoxy-6-sulfo-D-fructose 1-phosphate (SFP) to form dihydroxyacetone phosphate (DHAP) and 3-sulfolactaldehyde (SLA). This chain is Sulfofructosephosphate aldolase, found in Alkalicoccus urumqiensis (Bacillus urumqiensis).